The following is a 259-amino-acid chain: Hydroxyethylthiazole kinase 1 (259 aa).

Residue M38 coordinates substrate. 2 residues coordinate ATP: R113 and S158. G185 lines the substrate pocket.

This sequence belongs to the Thz kinase family. It depends on Mg(2+) as a cofactor.

The catalysed reaction is 5-(2-hydroxyethyl)-4-methylthiazole + ATP = 4-methyl-5-(2-phosphooxyethyl)-thiazole + ADP + H(+). It functions in the pathway cofactor biosynthesis; thiamine diphosphate biosynthesis; 4-methyl-5-(2-phosphoethyl)-thiazole from 5-(2-hydroxyethyl)-4-methylthiazole: step 1/1. Its function is as follows. Catalyzes the phosphorylation of the hydroxyl group of 4-methyl-5-beta-hydroxyethylthiazole (THZ). The polypeptide is Hydroxyethylthiazole kinase 1 (Leuconostoc mesenteroides subsp. mesenteroides (strain ATCC 8293 / DSM 20343 / BCRC 11652 / CCM 1803 / JCM 6124 / NCDO 523 / NBRC 100496 / NCIMB 8023 / NCTC 12954 / NRRL B-1118 / 37Y)).